The sequence spans 159 residues: Transcriptional repressor NrdR (159 aa).

A zinc finger lies at 3-34 (CPFCNAADSKVIDSRLAAEGCQIRRRRECISC). Residues 49 to 139 (PRVIKSNGKN…VYQDFQDVEA (91 aa)) form the ATP-cone domain.

The protein belongs to the NrdR family. It depends on Zn(2+) as a cofactor.

Functionally, negatively regulates transcription of bacterial ribonucleotide reductase nrd genes and operons by binding to NrdR-boxes. This chain is Transcriptional repressor NrdR, found in Acinetobacter baylyi (strain ATCC 33305 / BD413 / ADP1).